A 279-amino-acid polypeptide reads, in one-letter code: Proteasome subunit beta (279 aa).

A propeptide spans 1-56 (MASQAMSWRGEGERVVRDLAAASTSSFVEHLSQSRPDLLPFGQALPAGVLPQTPHA) (removed in mature form; by autocatalysis). Catalysis depends on Thr57, which acts as the Nucleophile.

This sequence belongs to the peptidase T1B family. In terms of assembly, the 20S proteasome core is composed of 14 alpha and 14 beta subunits that assemble into four stacked heptameric rings, resulting in a barrel-shaped structure. The two inner rings, each composed of seven catalytic beta subunits, are sandwiched by two outer rings, each composed of seven alpha subunits. The catalytic chamber with the active sites is on the inside of the barrel. Has a gated structure, the ends of the cylinder being occluded by the N-termini of the alpha-subunits. Is capped by the proteasome-associated ATPase, ARC.

It localises to the cytoplasm. It catalyses the reaction Cleavage of peptide bonds with very broad specificity.. The protein operates within protein degradation; proteasomal Pup-dependent pathway. Its activity is regulated as follows. The formation of the proteasomal ATPase ARC-20S proteasome complex, likely via the docking of the C-termini of ARC into the intersubunit pockets in the alpha-rings, may trigger opening of the gate for substrate entry. Interconversion between the open-gate and close-gate conformations leads to a dynamic regulation of the 20S proteasome proteolysis activity. Functionally, component of the proteasome core, a large protease complex with broad specificity involved in protein degradation. This Renibacterium salmoninarum (strain ATCC 33209 / DSM 20767 / JCM 11484 / NBRC 15589 / NCIMB 2235) protein is Proteasome subunit beta.